Reading from the N-terminus, the 478-residue chain is Alpha-(1,3)-fucosyltransferase FucT (478 aa).

Substrate contacts are provided by residues Gly94, 186 to 189 (VASN), Arg195, 222 to 225 (VKNK), Asn240, and 246 to 250 (YVTEK). The tract at residues 347–353 (DNPFIFC) is important for acceptor specificity. Tandem repeats lie at residues 364–370 (DDLRVNY), 371–377 (DDLRVNY), 378–384 (DDLRINY), 385–391 (DDLRVNY), 392–398 (DDLRINY), 399–405 (DDLRVNY), 406–412 (DDLRVNY), 413–419 (DDLRINY), 420–426 (DDLRVNY), and 427–433 (DDLRVNY). Residues 364 to 433 (DDLRVNYDDL…VNYDDLRVNY (70 aa)) are 10 X 7 AA tandem repeat of D-D-L-R-[IV]-N-Y. The tract at residues 434-478 (ERLLSKATPLLELSQNTTSKIYRKAYQKSLPLLRAIRRWVKKLGL) is may be involved in membrane binding.

This sequence belongs to the glycosyltransferase 10 family. In terms of assembly, homodimer.

It is found in the membrane. Its subcellular location is the cytoplasm. It carries out the reaction a beta-D-galactosyl-(1-&gt;4)-N-acetyl-beta-D-glucosaminyl derivative + GDP-beta-L-fucose = a beta-D-galactosyl-(1-&gt;4)-[alpha-L-fucosyl-(1-&gt;3)]-N-acetyl-beta-D-glucosaminyl derivative + GDP + H(+). The protein operates within lipopolysaccharide biosynthesis; LPS oligosaccharide biosynthesis. In terms of biological role, involved in the biosynthesis of the Lewis X (LeX) trisaccharide of the lipopolysaccharide (LPS) O-antigen. Catalyzes the addition of fucose in alpha 1-3 linkage to Gal-beta-1-4-GlcNAc-beta-O-R (LacNAc-R) type II acceptor. In Helicobacter pylori (Campylobacter pylori), this protein is Alpha-(1,3)-fucosyltransferase FucT.